The following is an 876-amino-acid chain: Probable LRR receptor-like protein kinase At1g51890 (876 aa).

The N-terminal stretch at 1–19 is a signal peptide; sequence MRFLSFLIFVFAVLGLVQA. Topologically, residues 20-500 are extracellular; the sequence is QDQSGFISLD…TGKNSTNVVA (481 aa). N-linked (GlcNAc...) asparagine glycosylation is found at Asn45, Asn90, Asn138, Asn177, Asn251, Asn259, Asn284, Asn290, Asn327, Asn335, Asn397, Asn412, and Asn417. LRR repeat units follow at residues 407 to 430, 431 to 453, and 455 to 476; these read QIISLNLSGSNLSGTITSDISKLT, HLRELDLSNNDLSGDIPFVFSDM, and NLTLINLSGNKNLNRSVPETLQ. 5 N-linked (GlcNAc...) asparagine glycosylation sites follow: Asn455, Asn460, Asn468, Asn481, and Asn494. Residues 501 to 521 form a helical membrane-spanning segment; sequence IAASVASVFAVLVILAIVFVV. Topologically, residues 522 to 872 are cytoplasmic; sequence IRKKQRTNEA…FSPSSASDFS (351 aa). Thr561 carries the post-translational modification Phosphothreonine. A Protein kinase domain is found at 570–842; it reads KNFERVLGKG…HVVMELNECL (273 aa). Residues 576 to 584 and Lys597 each bind ATP; that span reads LGKGGFGTV. Tyr642 carries the phosphotyrosine modification. Asp694 (proton acceptor) is an active-site residue. Phosphothreonine is present on residues Thr729 and Thr734. A Phosphotyrosine modification is found at Tyr742.

The protein belongs to the protein kinase superfamily. Ser/Thr protein kinase family.

The protein localises to the cell membrane. It carries out the reaction L-seryl-[protein] + ATP = O-phospho-L-seryl-[protein] + ADP + H(+). It catalyses the reaction L-threonyl-[protein] + ATP = O-phospho-L-threonyl-[protein] + ADP + H(+). In Arabidopsis thaliana (Mouse-ear cress), this protein is Probable LRR receptor-like protein kinase At1g51890.